We begin with the raw amino-acid sequence, 1070 residues long: Protocadherin-8 (1070 aa).

An N-terminal signal peptide occupies residues 1–29; sequence MSPAKRWGSPCLFPLQLFSLCWVLSVAQS. Cadherin domains follow at residues 30-135, 136-245, 247-354, 393-497, 498-609, and 615-721; these read KTVR…APRF, PRAQ…SPAF, QGAV…APEI, QEAG…APIF, TKPV…SPIL, and ANGS…VPAS. The Extracellular segment spans residues 30–747; it reads KTVRYSTFEE…SGPSLQWDTP (718 aa). Asparagine 616 is a glycosylation site (N-linked (GlcNAc...) asparagine). Low complexity predominate over residues 716 to 725; it reads SAVPASSGSP. The tract at residues 716–740 is disordered; it reads SAVPASSGSPEHSRPPGSRLAPSGP. A helical transmembrane segment spans residues 748–768; the sequence is LIVIIVLAGSCTLLLAAIIAI. The Cytoplasmic portion of the chain corresponds to 769–1070; sequence ATTCNRRKKE…SPKKGINENV (302 aa). Disordered stretches follow at residues 777–859, 906–928, and 1046–1070; these read KEVR…TGES, REAE…DSDS, and IGVP…NENV. 2 stretches are compositionally biased toward basic and acidic residues: residues 780–790 and 906–921; these read RKGGALREERP and REAE…KGDS. The residue at position 1053 (serine 1053) is a Phosphoserine.

The N-terminal extracellular domain forms homophilic interactions; these interactions activate p38 MAPK via TAOK2 and trigger endocytosis. Interacts with CDH2; this interaction may lead to CDH2 cointernalization. Interacts with CDH11. Interacts with TAOK2.

The protein resides in the cell membrane. It is found in the cell projection. The protein localises to the dendrite. Its subcellular location is the presynaptic cell membrane. It localises to the postsynaptic cell membrane. In terms of biological role, calcium-dependent cell-adhesion protein. May play a role in activity-induced synaptic reorganization underlying long term memory. Could be involved in CDH2 internalization through TAOK2/p38 MAPK pathway. In hippocampal neurons, may play a role in the down-regulation of dendritic spines, maybe through its action on CDH2 endocytosis. This Mus musculus (Mouse) protein is Protocadherin-8 (Pcdh8).